Here is a 313-residue protein sequence, read N- to C-terminus: Protein TIFY 4A (313 aa).

A disordered region spans residues Ser118–Glu149. Positions Thr150–Asn185 constitute a Tify domain. Disordered stretches follow at residues Lys220 to Lys256 and Gln281 to Ile313. The short motif at Gln232 to Ala254 is the Jas element. The Nuclear localization signal motif lies at Asn234–Arg241. A compositionally biased stretch (basic residues) spans Arg243–Lys256.

The protein belongs to the TIFY/JAZ family. Interacts with AFPH2/NINJA.

The protein resides in the nucleus. Its function is as follows. Regulates the arrest of dispersed meristematic cells during lamina development. The protein is Protein TIFY 4A (TIFY4A) of Arabidopsis thaliana (Mouse-ear cress).